Reading from the N-terminus, the 144-residue chain is 3-hydroxyacyl-[acyl-carrier-protein] dehydratase FabZ (144 aa).

H51 is a catalytic residue.

It belongs to the thioester dehydratase family. FabZ subfamily.

The protein resides in the cytoplasm. The enzyme catalyses a (3R)-hydroxyacyl-[ACP] = a (2E)-enoyl-[ACP] + H2O. Its function is as follows. Involved in unsaturated fatty acids biosynthesis. Catalyzes the dehydration of short chain beta-hydroxyacyl-ACPs and long chain saturated and unsaturated beta-hydroxyacyl-ACPs. In Clostridium botulinum (strain Langeland / NCTC 10281 / Type F), this protein is 3-hydroxyacyl-[acyl-carrier-protein] dehydratase FabZ.